Here is a 127-residue protein sequence, read N- to C-terminus: Large ribosomal subunit protein bL12 (127 aa).

This sequence belongs to the bacterial ribosomal protein bL12 family. In terms of assembly, homodimer. Part of the ribosomal stalk of the 50S ribosomal subunit. Forms a multimeric L10(L12)X complex, where L10 forms an elongated spine to which 2 to 4 L12 dimers bind in a sequential fashion. Binds GTP-bound translation factors.

Functionally, forms part of the ribosomal stalk which helps the ribosome interact with GTP-bound translation factors. Is thus essential for accurate translation. The chain is Large ribosomal subunit protein bL12 from Streptomyces virginiae (Streptomyces cinnamonensis).